The following is a 294-amino-acid chain: Extracellular metalloprotease TRV_07111 (294 aa).

Positions 1–19 are cleaved as a signal peptide; sequence MRFSVVFAAIAALSSVVTA. Asparagine 49, asparagine 54, and asparagine 74 each carry an N-linked (GlcNAc...) asparagine glycan. Residue histidine 185 coordinates Zn(2+). Glutamate 186 is an active-site residue. Histidine 189 serves as a coordination point for Zn(2+). Cysteine 224 and cysteine 250 are disulfide-bonded.

The protein belongs to the peptidase M43B family.

Its subcellular location is the secreted. Secreted metalloproteinase that allows assimilation of proteinaceous substrates. Plays a pivotal role as a pathogenicity determinant during infections and contributes to the ability of the pathogen to persist within the mammalian host. The sequence is that of Extracellular metalloprotease TRV_07111 from Trichophyton verrucosum (strain HKI 0517).